Here is a 38-residue protein sequence, read N- to C-terminus: GVPINVKCRGSPQCIQPCRDAGMRFGKCMNGKCHCTPQ.

3 disulfide bridges follow: Cys-8–Cys-28, Cys-14–Cys-33, and Cys-18–Cys-35. The segment at 26 to 33 is interaction with Ca(2+)-activated K(+) channels; it reads GKCMNGKC.

In terms of tissue distribution, expressed by the venom gland.

The protein resides in the secreted. Functionally, potassium channel inhibitor. In Hottentotta tamulus sindicus (Scorpion), this protein is Potassium channel toxin alpha-KTx 3.8.